We begin with the raw amino-acid sequence, 99 residues long: Cell cycle protein GpsB (99 aa).

Residues 34–71 adopt a coiled-coil conformation; it reads LDMIIKDYETFHQEIEELQQENLQLKKQLEEASKKQPV.

The protein belongs to the GpsB family. As to quaternary structure, forms polymers through the coiled coil domains. Interacts with PBP1, MreC and EzrA.

It is found in the cytoplasm. In terms of biological role, divisome component that associates with the complex late in its assembly, after the Z-ring is formed, and is dependent on DivIC and PBP2B for its recruitment to the divisome. Together with EzrA, is a key component of the system that regulates PBP1 localization during cell cycle progression. Its main role could be the removal of PBP1 from the cell pole after pole maturation is completed. Also contributes to the recruitment of PBP1 to the division complex. Not essential for septum formation. The chain is Cell cycle protein GpsB from Bacillus velezensis (strain DSM 23117 / BGSC 10A6 / LMG 26770 / FZB42) (Bacillus amyloliquefaciens subsp. plantarum).